Consider the following 369-residue polypeptide: MFQRYIGLMSGTSMDAVDAALVQIDAQGTPRLEAHHSLSFPPELRTRLLALSHTDNWQADELAGLDIAFSQLSAKVVERLLEKVSIAAKDITAIASHGQTVRHKPNSIPAYTCQIGDPTRLALGTGIDVIYDFRRKDIAAGGQGAPLVPAFHKQVFSRKNQSIAVINLGGIANVTWLGHNGNILGFDTGPANTLLDQWVQHNDSSKSFDENAQFARAGKLQPDLLKRLLQHPFFAKPAPKSTGREEFNLKWLQRQLTGHNISPADVQRTLTELTAISIKDALTTLPQQPDTAYFCGGGTRNPLLMERLTQLLAPIQCDTTASLGVDPQWVEAIAFAWLGWCFEHKKPGNQPEVTGASHPVVLGAKVLHQ.

11–18 (GTSMDAVD) contacts ATP.

Belongs to the anhydro-N-acetylmuramic acid kinase family.

The catalysed reaction is 1,6-anhydro-N-acetyl-beta-muramate + ATP + H2O = N-acetyl-D-muramate 6-phosphate + ADP + H(+). It participates in amino-sugar metabolism; 1,6-anhydro-N-acetylmuramate degradation. It functions in the pathway cell wall biogenesis; peptidoglycan recycling. In terms of biological role, catalyzes the specific phosphorylation of 1,6-anhydro-N-acetylmuramic acid (anhMurNAc) with the simultaneous cleavage of the 1,6-anhydro ring, generating MurNAc-6-P. Is required for the utilization of anhMurNAc either imported from the medium or derived from its own cell wall murein, and thus plays a role in cell wall recycling. In Idiomarina loihiensis (strain ATCC BAA-735 / DSM 15497 / L2-TR), this protein is Anhydro-N-acetylmuramic acid kinase.